The sequence spans 93 residues: Progonadoliberin-2 (93 aa).

The N-terminal stretch at 1-24 (MACQRHLLFLLLVLFAVSTQLSHG) is a signal peptide. Position 25 is a pyrrolidone carboxylic acid (Q25). G34 bears the Glycine amide mark.

This sequence belongs to the GnRH family. In terms of tissue distribution, midbrain and hindbrain.

The protein localises to the secreted. Stimulates the secretion of gonadotropins. The chain is Progonadoliberin-2 (gnrh2) from Aquarana catesbeiana (American bullfrog).